A 398-amino-acid polypeptide reads, in one-letter code: NADH-quinone oxidoreductase subunit D (398 aa).

Belongs to the complex I 49 kDa subunit family. In terms of assembly, NDH-1 is composed of 14 different subunits. Subunits NuoB, C, D, E, F, and G constitute the peripheral sector of the complex.

The protein localises to the cell inner membrane. The enzyme catalyses a quinone + NADH + 5 H(+)(in) = a quinol + NAD(+) + 4 H(+)(out). NDH-1 shuttles electrons from NADH, via FMN and iron-sulfur (Fe-S) centers, to quinones in the respiratory chain. The immediate electron acceptor for the enzyme in this species is believed to be ubiquinone. Couples the redox reaction to proton translocation (for every two electrons transferred, four hydrogen ions are translocated across the cytoplasmic membrane), and thus conserves the redox energy in a proton gradient. This is NADH-quinone oxidoreductase subunit D from Bradyrhizobium sp. (strain ORS 278).